The primary structure comprises 457 residues: Protein unc-93 homolog A (457 aa).

The next 5 membrane-spanning stretches (helical) occupy residues 8–28, 42–62, 65–85, 86–106, and 140–160; these read VLVL…LQSL, ALST…PVLI, LGCK…SLGN, FYAS…GAAA, and IFFL…SLVF. N-linked (GlcNAc...) asparagine glycosylation is present at N190. 6 consecutive transmembrane segments (helical) span residues 202 to 222, 257 to 277, 291 to 311, 320 to 340, 344 to 364, and 395 to 415; these read TLLG…AVFL, LRLL…LSGD, FVGY…VLFG, TVLF…LLLW, PSQL…DAVW, and FVIA…YVLL. Residues 438-457 are disordered; the sequence is GPLAAGRTKPAEDGATQTKL.

Belongs to the unc-93 family.

It is found in the cell membrane. The sequence is that of Protein unc-93 homolog A (UNC93A) from Bos taurus (Bovine).